The primary structure comprises 696 residues: Glycine--tRNA ligase beta subunit (696 aa).

Belongs to the class-II aminoacyl-tRNA synthetase family. As to quaternary structure, tetramer of two alpha and two beta subunits.

Its subcellular location is the cytoplasm. It carries out the reaction tRNA(Gly) + glycine + ATP = glycyl-tRNA(Gly) + AMP + diphosphate. The sequence is that of Glycine--tRNA ligase beta subunit from Nitratidesulfovibrio vulgaris (strain ATCC 29579 / DSM 644 / CCUG 34227 / NCIMB 8303 / VKM B-1760 / Hildenborough) (Desulfovibrio vulgaris).